Here is a 421-residue protein sequence, read N- to C-terminus: MNTGKQQKPVLTGQRFKTRKRDEKEKFEPTVFRDTIVQGLNEAGGDLDALAKFLDVTGSRLDYRRYADTLFDILIAGSMLAPGGTRIDDADKTKVTQHCVFNAEENHTTIRSYAQVFNKLIRRYKYLEKAFEEEIKKLLLFLKGFTESEQTKLAMLTGVLLANGTLPPPILTSLFSDNLVKEGISASFAVKMFKAWIAEKDANAVTSALRKANLDKKLLELFPANKQNVEHFTKFFTEAGLKELSDFLRTQQTLGTRKELQKELQERLSQQCPIREIVVYVKEEMKKNDLQEQAVIGLLWTCLMNAVEWNKKEELVTEQALKHLKHYAPLLAVFSTQGQSELVLLLKIQEYCYDNIHFMKSFSKIVVLFYKADVVSEEAIMKWYKDAHAAKGKSVFLEQMKKFVEWLQNAEEESESEGEED.

Positions 1 to 24 are disordered; the sequence is MNTGKQQKPVLTGQRFKTRKRDEK. The region spanning 250–417 is the W2 domain; the sequence is TQQTLGTRKE…QNAEEESESE (168 aa).

The protein belongs to the BZW family.

It localises to the cytoplasm. Functionally, translation initiation regulator which may repress non-AUG initiated translation and repeat-associated non-AUG (RAN) initiated translation by acting as a competitive inhibitor of eukaryotic translation initiation factor 5 (EIF5) function. This Danio rerio (Zebrafish) protein is eIF5-mimic protein 1 (bzw2).